Reading from the N-terminus, the 72-residue chain is Large ribosomal subunit protein bL31 (72 aa).

Zn(2+) is bound by residues C16, C18, C36, and C39.

This sequence belongs to the bacterial ribosomal protein bL31 family. Type A subfamily. Part of the 50S ribosomal subunit. The cofactor is Zn(2+).

Binds the 23S rRNA. This chain is Large ribosomal subunit protein bL31, found in Geobacter sp. (strain M21).